A 131-amino-acid polypeptide reads, in one-letter code: Ribosome-binding factor A (131 aa).

It belongs to the RbfA family. As to quaternary structure, monomer. Binds 30S ribosomal subunits, but not 50S ribosomal subunits or 70S ribosomes.

It localises to the cytoplasm. Its function is as follows. One of several proteins that assist in the late maturation steps of the functional core of the 30S ribosomal subunit. Associates with free 30S ribosomal subunits (but not with 30S subunits that are part of 70S ribosomes or polysomes). Required for efficient processing of 16S rRNA. May interact with the 5'-terminal helix region of 16S rRNA. The chain is Ribosome-binding factor A from Chromohalobacter salexigens (strain ATCC BAA-138 / DSM 3043 / CIP 106854 / NCIMB 13768 / 1H11).